We begin with the raw amino-acid sequence, 420 residues long: 5'-deoxyadenosine deaminase (420 aa).

2 residues coordinate Zn(2+): His-55 and His-57. Glu-84 and His-176 together coordinate substrate. His-203 contributes to the Zn(2+) binding site. Glu-206 and Asp-292 together coordinate substrate. A Zn(2+)-binding site is contributed by Asp-292.

This sequence belongs to the metallo-dependent hydrolases superfamily. MTA/SAH deaminase family. Homotetramer. Zn(2+) is required as a cofactor.

The catalysed reaction is 5'-deoxyadenosine + H2O + H(+) = 5'-deoxyinosine + NH4(+). The enzyme catalyses S-adenosyl-L-homocysteine + H2O + H(+) = S-inosyl-L-homocysteine + NH4(+). It catalyses the reaction S-methyl-5'-thioadenosine + H2O + H(+) = S-methyl-5'-thioinosine + NH4(+). It carries out the reaction adenosine + H2O + H(+) = inosine + NH4(+). It functions in the pathway amino-acid biosynthesis; S-adenosyl-L-methionine biosynthesis. Its function is as follows. Catalyzes the deamination of three SAM-derived enzymatic products, namely 5'-deoxyadenosine, S-adenosyl-L-homocysteine, and 5'-methylthioadenosine, to produce the inosine analogs. Can also deaminate adenosine. The preferred substrate for this enzyme is 5'-deoxyadenosine, but all these substrates are efficiently deaminated. Likely functions in a S-adenosyl-L-methionine (SAM) recycling pathway from S-adenosyl-L-homocysteine (SAH) produced from SAM-dependent methylation reactions. May also be involved in the recycling of 5'-deoxyadenosine, whereupon the 5'-deoxyribose moiety of 5'-deoxyinosine is further metabolized to deoxyhexoses used for the biosynthesis of aromatic amino acids in methanogens. This Methanocaldococcus jannaschii (strain ATCC 43067 / DSM 2661 / JAL-1 / JCM 10045 / NBRC 100440) (Methanococcus jannaschii) protein is 5'-deoxyadenosine deaminase.